A 367-amino-acid chain; its full sequence is UDP-galactopyranose mutase (367 aa).

FAD-binding positions include phenylalanine 12, 31–32, asparagine 39, and 56–57; these read EK and HI. Phenylalanine 12 lines the UDP-alpha-D-galactose pocket. Residues asparagine 80, threonine 152, tryptophan 156, and tyrosine 181 each coordinate UDP-alpha-D-galactose. 212 to 213 serves as a coordination point for FAD; that stretch reads DF. Positions 268, 278, and 311 each coordinate UDP-alpha-D-galactose. Arginine 340 serves as a coordination point for FAD. Tyrosine 346 contributes to the UDP-alpha-D-galactose binding site. 347 to 352 contributes to the FAD binding site; sequence YDMHQV.

As to quaternary structure, homodimer. FAD serves as cofactor.

It catalyses the reaction UDP-alpha-D-galactose = UDP-alpha-D-galactofuranose. It participates in bacterial outer membrane biogenesis; lipopolysaccharide biosynthesis. Catalyzes the interconversion through a 2-keto intermediate of uridine diphosphogalactopyranose (UDP-GalP) into uridine diphosphogalactofuranose (UDP-GalF). This is UDP-galactopyranose mutase (glf) from Escherichia coli (strain K12).